We begin with the raw amino-acid sequence, 266 residues long: Manganese catalase (266 aa).

Mn(2+) is bound at residue Glu35. Ca(2+) is bound by residues Asp57 and Asp61. Residues Glu66, His69, Glu148, and His181 each coordinate Mn(2+). Residues Asn218, Ser220, and Gly222 each contribute to the Ca(2+) site. Residues 243-266 (ENPEAMGGIPHIKPGDPRLHNHQG) form a disordered region. The span at 255–266 (KPGDPRLHNHQG) shows a compositional bias: basic and acidic residues.

The protein belongs to the manganese catalase family. In terms of assembly, homohexamer. It depends on Ca(2+) as a cofactor. The cofactor is Mn(2+).

It catalyses the reaction 2 H2O2 = O2 + 2 H2O. Its function is as follows. Catalyzes the decomposition of hydrogen peroxide into water and oxygen. This chain is Manganese catalase, found in Lactiplantibacillus plantarum (Lactobacillus plantarum).